The chain runs to 494 residues: Ribonuclease H (494 aa).

2 disordered regions span residues 79–148 (NRRR…APPP) and 205–231 (RSGL…VGLR). Polar residues-rich tracts occupy residues 84 to 100 (GSTS…NQLA) and 131 to 143 (PTTS…TRTS). Residues 272 to 488 (SSVPQVVYVD…ADVLAVAGAR (217 aa)) enclose the RNase H type-1 domain. Residues Asp-281, Glu-325, Asp-374, and Asp-480 each coordinate Mg(2+).

This sequence belongs to the RNase H family. In terms of assembly, monomer. Mg(2+) is required as a cofactor.

It catalyses the reaction Endonucleolytic cleavage to 5'-phosphomonoester.. Its function is as follows. Endonuclease that specifically degrades the RNA of RNA-DNA hybrids. The polypeptide is Ribonuclease H (RNH1) (Crithidia fasciculata).